Here is a 281-residue protein sequence, read N- to C-terminus: NADPH-dependent 7-cyano-7-deazaguanine reductase (281 aa).

88–90 (VES) lines the substrate pocket. Position 90 to 91 (90 to 91 (SK)) interacts with NADPH. Catalysis depends on C189, which acts as the Thioimide intermediate. The active-site Proton donor is D196. 228-229 (HE) serves as a coordination point for substrate. Position 257–258 (257–258 (RG)) interacts with NADPH.

Belongs to the GTP cyclohydrolase I family. QueF type 2 subfamily. Homodimer.

The protein resides in the cytoplasm. The enzyme catalyses 7-aminomethyl-7-carbaguanine + 2 NADP(+) = 7-cyano-7-deazaguanine + 2 NADPH + 3 H(+). It functions in the pathway tRNA modification; tRNA-queuosine biosynthesis. Functionally, catalyzes the NADPH-dependent reduction of 7-cyano-7-deazaguanine (preQ0) to 7-aminomethyl-7-deazaguanine (preQ1). In Cronobacter sakazakii (strain ATCC BAA-894) (Enterobacter sakazakii), this protein is NADPH-dependent 7-cyano-7-deazaguanine reductase.